The chain runs to 295 residues: Sulfotransferase 1A2 (295 aa).

48-53 (KSGTTW) provides a ligand contact to 3'-phosphoadenylyl sulfate. Residue 106–108 (KTH) participates in substrate binding. His108 functions as the Proton acceptor in the catalytic mechanism. Residues Arg130, Ser138, Tyr193, 227 to 232 (TSFKEM), and 255 to 259 (FMRKG) contribute to the 3'-phosphoadenylyl sulfate site.

It belongs to the sulfotransferase 1 family. As to quaternary structure, homodimer.

It is found in the cytoplasm. It catalyses the reaction a phenol + 3'-phosphoadenylyl sulfate = an aryl sulfate + adenosine 3',5'-bisphosphate + H(+). Sulfotransferase that utilizes 3'-phospho-5'-adenylyl sulfate (PAPS) as sulfonate donor to catalyze the sulfate conjugation of catecholamines, phenolic drugs and neurotransmitters. Is also responsible for the sulfonation and activation of minoxidil. Mediates the metabolic activation of carcinogenic N-hydroxyarylamines to DNA binding products and could so participate as modulating factor of cancer risk. This chain is Sulfotransferase 1A2 (SULT1A2), found in Homo sapiens (Human).